The sequence spans 277 residues: Shikimate dehydrogenase (NADP(+)) (277 aa).

Shikimate-binding positions include Ser-15 to Ser-17 and Thr-62. Catalysis depends on Lys-66, which acts as the Proton acceptor. 2 residues coordinate shikimate: Asn-87 and Asp-102. Residues Gly-127–Ala-131, Asn-151–Lys-156, and Ile-219 each bind NADP(+). Residue Tyr-221 coordinates shikimate. NADP(+) is bound at residue Gly-242.

It belongs to the shikimate dehydrogenase family. As to quaternary structure, homodimer.

It carries out the reaction shikimate + NADP(+) = 3-dehydroshikimate + NADPH + H(+). It functions in the pathway metabolic intermediate biosynthesis; chorismate biosynthesis; chorismate from D-erythrose 4-phosphate and phosphoenolpyruvate: step 4/7. In terms of biological role, involved in the biosynthesis of the chorismate, which leads to the biosynthesis of aromatic amino acids. Catalyzes the reversible NADPH linked reduction of 3-dehydroshikimate (DHSA) to yield shikimate (SA). In Bacillus cereus (strain G9842), this protein is Shikimate dehydrogenase (NADP(+)).